Consider the following 547-residue polypeptide: Chaperonin GroEL (547 aa).

ATP-binding positions include 30 to 33 (TLGP), Lys-51, 87 to 91 (DGTTT), Gly-415, 479 to 481 (NAA), and Asp-495. The tract at residues 524-547 (APKKDEPTPPAAGGGMGGMGGMDF) is disordered. Over residues 535–547 (AGGGMGGMGGMDF) the composition is skewed to gly residues.

Belongs to the chaperonin (HSP60) family. In terms of assembly, forms a cylinder of 14 subunits composed of two heptameric rings stacked back-to-back. Interacts with the co-chaperonin GroES.

The protein localises to the cytoplasm. The enzyme catalyses ATP + H2O + a folded polypeptide = ADP + phosphate + an unfolded polypeptide.. In terms of biological role, together with its co-chaperonin GroES, plays an essential role in assisting protein folding. The GroEL-GroES system forms a nano-cage that allows encapsulation of the non-native substrate proteins and provides a physical environment optimized to promote and accelerate protein folding. The protein is Chaperonin GroEL of Xylella fastidiosa (strain M23).